The chain runs to 129 residues: DNA-directed RNA polymerase subunit omega (129 aa).

Positions 76–101 are disordered; that stretch reads EVDEPEPDPVTLAASAADGEDDDQPE.

Belongs to the RNA polymerase subunit omega family. As to quaternary structure, the RNAP catalytic core consists of 2 alpha, 1 beta, 1 beta' and 1 omega subunit. When a sigma factor is associated with the core the holoenzyme is formed, which can initiate transcription.

The enzyme catalyses RNA(n) + a ribonucleoside 5'-triphosphate = RNA(n+1) + diphosphate. In terms of biological role, promotes RNA polymerase assembly. Latches the N- and C-terminal regions of the beta' subunit thereby facilitating its interaction with the beta and alpha subunits. The protein is DNA-directed RNA polymerase subunit omega of Agrobacterium fabrum (strain C58 / ATCC 33970) (Agrobacterium tumefaciens (strain C58)).